The following is a 446-amino-acid chain: Light-independent protochlorophyllide reductase subunit N (446 aa).

[4Fe-4S] cluster-binding residues include C22, C47, and C107.

It belongs to the BchN/ChlN family. As to quaternary structure, protochlorophyllide reductase is composed of three subunits; ChlL, ChlN and ChlB. Forms a heterotetramer of two ChlB and two ChlN subunits. It depends on [4Fe-4S] cluster as a cofactor.

It localises to the plastid. The protein resides in the chloroplast. The catalysed reaction is chlorophyllide a + oxidized 2[4Fe-4S]-[ferredoxin] + 2 ADP + 2 phosphate = protochlorophyllide a + reduced 2[4Fe-4S]-[ferredoxin] + 2 ATP + 2 H2O. It functions in the pathway porphyrin-containing compound metabolism; chlorophyll biosynthesis (light-independent). In terms of biological role, component of the dark-operative protochlorophyllide reductase (DPOR) that uses Mg-ATP and reduced ferredoxin to reduce ring D of protochlorophyllide (Pchlide) to form chlorophyllide a (Chlide). This reaction is light-independent. The NB-protein (ChlN-ChlB) is the catalytic component of the complex. The chain is Light-independent protochlorophyllide reductase subunit N from Mesostigma viride (Green alga).